Consider the following 146-residue polypeptide: MGKSSFLQDFKAFAMRGNVIDMAVGVIIGGAFGKIVSSIVADVIMPPIGLLVGGVNFTDLKLQLKPAEVVDGVEKAAVTLNYGNFLQATFDFIIIAFSIFLFIRLLAKLNRKKEEVPAPAAPPAPSKEEVLLTEIRDLLKEQAGKK.

2 consecutive transmembrane segments (helical) span residues 12–32 (AFAM…GGAF) and 83–103 (GNFL…FLFI).

The protein belongs to the MscL family. In terms of assembly, homopentamer.

The protein resides in the cell inner membrane. Channel that opens in response to stretch forces in the membrane lipid bilayer. May participate in the regulation of osmotic pressure changes within the cell. The protein is Large-conductance mechanosensitive channel of Phocaeicola vulgatus (strain ATCC 8482 / DSM 1447 / JCM 5826 / CCUG 4940 / NBRC 14291 / NCTC 11154) (Bacteroides vulgatus).